Consider the following 386-residue polypeptide: Cystathionine gamma-synthase (386 aa).

Lysine 198 carries the post-translational modification N6-(pyridoxal phosphate)lysine.

This sequence belongs to the trans-sulfuration enzymes family. Homotetramer. The cofactor is pyridoxal 5'-phosphate.

The protein localises to the cytoplasm. The catalysed reaction is O-succinyl-L-homoserine + L-cysteine = L,L-cystathionine + succinate + H(+). The protein operates within amino-acid biosynthesis; L-methionine biosynthesis via de novo pathway; L-cystathionine from O-succinyl-L-homoserine: step 1/1. Functionally, catalyzes the formation of L-cystathionine from O-succinyl-L-homoserine (OSHS) and L-cysteine, via a gamma-replacement reaction. In the absence of thiol, catalyzes gamma-elimination to form 2-oxobutanoate, succinate and ammonia. The protein is Cystathionine gamma-synthase (metB) of Escherichia coli (strain K12).